A 1381-amino-acid chain; its full sequence is Hepatocyte growth factor receptor (1381 aa).

The first 24 residues, Met-1–Gly-24, serve as a signal peptide directing secretion. The Extracellular segment spans residues Glu-25–Thr-932. One can recognise a Sema domain in the interval Lys-27–Leu-515. Asn-45 and Asn-74 each carry an N-linked (GlcNAc...) asparagine glycan. 6 cysteine pairs are disulfide-bonded: Cys-95–Cys-101, Cys-98–Cys-159, Cys-133–Cys-141, Cys-172–Cys-175, Cys-298–Cys-363, and Cys-385–Cys-397. Asn-106 carries N-linked (GlcNAc...) asparagine glycosylation. The N-linked (GlcNAc...) asparagine glycan is linked to Asn-358. Residue Asn-399 is glycosylated (N-linked (GlcNAc...) asparagine). 4 disulfide bridges follow: Cys-520/Cys-538, Cys-526/Cys-561, Cys-529/Cys-545, and Cys-541/Cys-551. 3 IPT/TIG domains span residues Pro-563–Val-655, Pro-657–Arg-739, and Pro-742–Val-836. Residue Thr-582 is glycosylated (O-linked (Man) threonine). N-linked (GlcNAc...) asparagine glycans are attached at residues Asn-607 and Asn-635. Residues Thr-676 and Thr-761 are each glycosylated (O-linked (Man) threonine). N-linked (GlcNAc...) asparagine glycans are attached at residues Asn-785, Asn-879, and Asn-930. The chain crosses the membrane as a helical span at residues Gly-933–Leu-955. The Cytoplasmic segment spans residues Lys-956–Thr-1381. Ser-966 carries the phosphoserine modification. At Thr-977 the chain carries Phosphothreonine. Residues Ser-990, Ser-997, and Ser-1000 each carry the phosphoserine modification. Phosphotyrosine is present on Tyr-1003. A Protein kinase domain is found at Val-1078–Ile-1345. ATP-binding positions include Ile-1084 to Val-1092 and Lys-1110. The active-site Proton acceptor is the Asp-1204. An interaction with RANBP9 region spans residues Leu-1212–Thr-1381. Tyr-1230 is modified (phosphotyrosine). Phosphotyrosine; by autocatalysis occurs at positions 1234 and 1235. Thr-1289 bears the Phosphothreonine mark. The segment at Trp-1320–Val-1359 is interaction with MUC20. Phosphotyrosine; by autocatalysis is present on residues Tyr-1349 and Tyr-1356. Tyr-1365 carries the phosphotyrosine modification.

Belongs to the protein kinase superfamily. Tyr protein kinase family. As to quaternary structure, heterodimer made of an alpha chain (50 kDa) and a beta chain (145 kDa) which are disulfide linked. Binds PLXNB1. Interacts when phosphorylated with downstream effectors including STAT3, PIK3R1, SRC, PCLG1, GRB2 and GAB1. Interacts with SPSB1, SPSB2 and SPSB4. Interacts with INPP5D/SHIP1. When phosphorylated at Tyr-1356, interacts with INPPL1/SHIP2. Interacts with RANBP9 and RANBP10, as well as SPSB1, SPSB2, SPSB3 and SPSB4. SPSB1 binding occurs in the presence and in the absence of HGF, however HGF treatment has a positive effect on this interaction. Interacts with MUC20; prevents interaction with GRB2 and suppresses hepatocyte growth factor-induced cell proliferation. Interacts with GRB10. Interacts with PTPN1 and PTPN2. Interacts with HSP90AA1 and HSP90AB1; the interaction suppresses MET kinase activity. Interacts with tensin TNS3. Interacts (when phosphorylated) with tensin TNS4 (via SH2 domain); the interaction increases MET protein stability by inhibiting MET endocytosis and subsequent lysosomal degradation. Post-translationally, autophosphorylated in response to ligand binding on Tyr-1234 and Tyr-1235 in the kinase domain leading to further phosphorylation of Tyr-1349 and Tyr-1356 in the C-terminal multifunctional docking site. Dephosphorylated by PTPRJ at Tyr-1349 and Tyr-1365. Dephosphorylated by PTPN1 and PTPN2. Ubiquitinated. Ubiquitination by CBL regulates the receptor stability and activity through proteasomal degradation. In terms of processing, O-mannosylation of IPT/TIG domains by TMEM260 is required for protein maturation. O-mannosylated residues are composed of single mannose glycans that are not elongated or modified.

It localises to the membrane. It carries out the reaction L-tyrosyl-[protein] + ATP = O-phospho-L-tyrosyl-[protein] + ADP + H(+). With respect to regulation, in its inactive state, the C-terminal tail interacts with the catalytic domain and inhibits the kinase activity. Upon ligand binding, the C-terminal tail is displaced and becomes phosphorylated, thus increasing the kinase activity. Functionally, receptor tyrosine kinase that transduces signals from the extracellular matrix into the cytoplasm by binding to hepatocyte growth factor/HGF ligand. Regulates many physiological processes including proliferation, scattering, morphogenesis and survival. Ligand binding at the cell surface induces autophosphorylation of MET on its intracellular domain that provides docking sites for downstream signaling molecules. Following activation by ligand, interacts with the PI3-kinase subunit PIK3R1, PLCG1, SRC, GRB2, STAT3 or the adapter GAB1. Recruitment of these downstream effectors by MET leads to the activation of several signaling cascades including the RAS-ERK, PI3 kinase-AKT, or PLCgamma-PKC. The RAS-ERK activation is associated with the morphogenetic effects while PI3K/AKT coordinates prosurvival effects. During embryonic development, MET signaling plays a role in gastrulation, development and migration of muscles and neuronal precursors, angiogenesis and kidney formation. In adults, participates in wound healing as well as organ regeneration and tissue remodeling. Also promotes differentiation and proliferation of hematopoietic cells. The protein is Hepatocyte growth factor receptor (MET) of Rhinolophus ferrumequinum (Greater horseshoe bat).